A 314-amino-acid chain; its full sequence is uncharacterized protein (314 aa).

The segment at 39–146 is disordered; the sequence is QENVDSDSTD…SDYSSDESNS (108 aa). Residues 56 to 76 are compositionally biased toward polar residues; sequence STKNVSRNIPKNIPKSISKNI. Residues 88–131 show a composition bias toward low complexity; the sequence is IPKNVSKNIPKNVPKNVSKNIPKNIPKNVPNKSRNKYSNYSEDS. Acidic residues predominate over residues 132-141; sequence NYSEDSDYSS.

This is an uncharacterized protein from Acanthamoeba polyphaga mimivirus (APMV).